The primary structure comprises 333 residues: Lipoyl synthase (333 aa).

A compositionally biased stretch (polar residues) spans 1–15 (MSTLVESPVPSNDSQ). A disordered region spans residues 1–34 (MSTLVESPVPSNDSQAAAPAAYDPTQKQKSQAKT). The [4Fe-4S] cluster site is built by C80, C85, C91, C106, C110, C113, and S320. In terms of domain architecture, Radical SAM core spans 91–309 (CFGKGTATFM…EREAYAMGFT (219 aa)).

The protein belongs to the radical SAM superfamily. Lipoyl synthase family. The cofactor is [4Fe-4S] cluster.

The protein localises to the cytoplasm. It carries out the reaction [[Fe-S] cluster scaffold protein carrying a second [4Fe-4S](2+) cluster] + N(6)-octanoyl-L-lysyl-[protein] + 2 oxidized [2Fe-2S]-[ferredoxin] + 2 S-adenosyl-L-methionine + 4 H(+) = [[Fe-S] cluster scaffold protein] + N(6)-[(R)-dihydrolipoyl]-L-lysyl-[protein] + 4 Fe(3+) + 2 hydrogen sulfide + 2 5'-deoxyadenosine + 2 L-methionine + 2 reduced [2Fe-2S]-[ferredoxin]. It participates in protein modification; protein lipoylation via endogenous pathway; protein N(6)-(lipoyl)lysine from octanoyl-[acyl-carrier-protein]: step 2/2. Catalyzes the radical-mediated insertion of two sulfur atoms into the C-6 and C-8 positions of the octanoyl moiety bound to the lipoyl domains of lipoate-dependent enzymes, thereby converting the octanoylated domains into lipoylated derivatives. This chain is Lipoyl synthase, found in Bordetella bronchiseptica (strain ATCC BAA-588 / NCTC 13252 / RB50) (Alcaligenes bronchisepticus).